We begin with the raw amino-acid sequence, 427 residues long: Glutamate-1-semialdehyde 2,1-aminomutase (427 aa).

The residue at position 265 (K265) is an N6-(pyridoxal phosphate)lysine.

The protein belongs to the class-III pyridoxal-phosphate-dependent aminotransferase family. HemL subfamily. As to quaternary structure, homodimer. It depends on pyridoxal 5'-phosphate as a cofactor.

The protein localises to the cytoplasm. It catalyses the reaction (S)-4-amino-5-oxopentanoate = 5-aminolevulinate. It participates in porphyrin-containing compound metabolism; protoporphyrin-IX biosynthesis; 5-aminolevulinate from L-glutamyl-tRNA(Glu): step 2/2. The polypeptide is Glutamate-1-semialdehyde 2,1-aminomutase (Teredinibacter turnerae (strain ATCC 39867 / T7901)).